The sequence spans 238 residues: Enolase-phosphatase E1 (238 aa).

It belongs to the HAD-like hydrolase superfamily. MasA/MtnC family. In terms of assembly, monomer. It depends on Mg(2+) as a cofactor.

The catalysed reaction is 5-methylsulfanyl-2,3-dioxopentyl phosphate + H2O = 1,2-dihydroxy-5-(methylsulfanyl)pent-1-en-3-one + phosphate. Its pathway is amino-acid biosynthesis; L-methionine biosynthesis via salvage pathway; L-methionine from S-methyl-5-thio-alpha-D-ribose 1-phosphate: step 3/6. The protein operates within amino-acid biosynthesis; L-methionine biosynthesis via salvage pathway; L-methionine from S-methyl-5-thio-alpha-D-ribose 1-phosphate: step 4/6. In terms of biological role, bifunctional enzyme that catalyzes the enolization of 2,3-diketo-5-methylthiopentyl-1-phosphate (DK-MTP-1-P) into the intermediate 2-hydroxy-3-keto-5-methylthiopentenyl-1-phosphate (HK-MTPenyl-1-P), which is then dephosphorylated to form the acireductone 1,2-dihydroxy-3-keto-5-methylthiopentene (DHK-MTPene). In Synechococcus elongatus (strain ATCC 33912 / PCC 7942 / FACHB-805) (Anacystis nidulans R2), this protein is Enolase-phosphatase E1.